The following is a 339-amino-acid chain: Anthranilate phosphoribosyltransferase (339 aa).

5-phospho-alpha-D-ribose 1-diphosphate contacts are provided by residues Gly79, 82 to 83 (GD), Thr87, 89 to 92 (NVST), 107 to 115 (KHGNRAVSS), and Ser119. Residue Gly79 coordinates anthranilate. Residue Ser91 participates in Mg(2+) binding. Position 110 (Asn110) interacts with anthranilate. Residue Arg165 coordinates anthranilate. 2 residues coordinate Mg(2+): Asp224 and Glu225.

The protein belongs to the anthranilate phosphoribosyltransferase family. As to quaternary structure, homodimer. Mg(2+) is required as a cofactor.

The enzyme catalyses N-(5-phospho-beta-D-ribosyl)anthranilate + diphosphate = 5-phospho-alpha-D-ribose 1-diphosphate + anthranilate. It participates in amino-acid biosynthesis; L-tryptophan biosynthesis; L-tryptophan from chorismate: step 2/5. Catalyzes the transfer of the phosphoribosyl group of 5-phosphorylribose-1-pyrophosphate (PRPP) to anthranilate to yield N-(5'-phosphoribosyl)-anthranilate (PRA). The chain is Anthranilate phosphoribosyltransferase from Geobacillus stearothermophilus (Bacillus stearothermophilus).